Here is a 400-residue protein sequence, read N- to C-terminus: Formate-dependent phosphoribosylglycinamide formyltransferase (400 aa).

N(1)-(5-phospho-beta-D-ribosyl)glycinamide-binding positions include E22–L23 and E82. ATP contacts are provided by residues R115, K157, S162–Q167, E197–I200, and E205. The region spanning R120–L315 is the ATP-grasp domain. E274 and E286 together coordinate Mg(2+). N(1)-(5-phospho-beta-D-ribosyl)glycinamide-binding positions include D293, K362, and R369–R370.

It belongs to the PurK/PurT family. As to quaternary structure, homodimer.

It carries out the reaction N(1)-(5-phospho-beta-D-ribosyl)glycinamide + formate + ATP = N(2)-formyl-N(1)-(5-phospho-beta-D-ribosyl)glycinamide + ADP + phosphate + H(+). It participates in purine metabolism; IMP biosynthesis via de novo pathway; N(2)-formyl-N(1)-(5-phospho-D-ribosyl)glycinamide from N(1)-(5-phospho-D-ribosyl)glycinamide (formate route): step 1/1. In terms of biological role, involved in the de novo purine biosynthesis. Catalyzes the transfer of formate to 5-phospho-ribosyl-glycinamide (GAR), producing 5-phospho-ribosyl-N-formylglycinamide (FGAR). Formate is provided by PurU via hydrolysis of 10-formyl-tetrahydrofolate. This chain is Formate-dependent phosphoribosylglycinamide formyltransferase, found in Variovorax paradoxus (strain S110).